The following is a 132-amino-acid chain: Secreted RxLR effector protein RXLR-C22 (132 aa).

Positions methionine 1–alanine 21 are cleaved as a signal peptide. Residues arginine 56 to arginine 74 carry the RxLR-dEER motif. N-linked (GlcNAc...) asparagine glycosylation occurs at asparagine 116.

The protein belongs to the RxLR effector family.

Its subcellular location is the secreted. The protein localises to the host Golgi apparatus. Secreted effector that does not suppress pattern-triggered immunity (PTI) in plant host. The chain is Secreted RxLR effector protein RXLR-C22 from Plasmopara halstedii (Downy mildew of sunflower).